A 491-amino-acid chain; its full sequence is Nickel-binding protein NikA (491 aa).

The signal sequence occupies residues 1 to 18; it reads MKFKRLATIFSAVLVLSG. The N-palmitoyl cysteine moiety is linked to residue Cys19. Residue Cys19 is the site of S-diacylglycerol cysteine attachment.

The protein belongs to the bacterial solute-binding protein 5 family. As to quaternary structure, the complex is composed of two ATP-binding proteins (NikD and NikE), two transmembrane proteins (NikB and NikC) and a solute-binding protein (NikA).

The protein resides in the cell membrane. Part of the ABC transporter complex NikABCDE (Opp2) involved in nickel import. Binds nickel and transfers it to the membrane-bound permease. Required for full urease activity and plays a significant role in the virulence of S.aureus during urinary tract infection (UTI). May bind nickel via a nickel-chelator. This Staphylococcus aureus (strain NCTC 8325 / PS 47) protein is Nickel-binding protein NikA.